A 452-amino-acid polypeptide reads, in one-letter code: Phosphoglucosamine mutase (452 aa).

Catalysis depends on Ser104, which acts as the Phosphoserine intermediate. Mg(2+) is bound by residues Ser104, Asp246, Asp248, and Asp250. Ser104 is modified (phosphoserine).

Belongs to the phosphohexose mutase family. Mg(2+) is required as a cofactor. Post-translationally, activated by phosphorylation.

The catalysed reaction is alpha-D-glucosamine 1-phosphate = D-glucosamine 6-phosphate. Its function is as follows. Catalyzes the conversion of glucosamine-6-phosphate to glucosamine-1-phosphate. This chain is Phosphoglucosamine mutase, found in Streptomyces griseus subsp. griseus (strain JCM 4626 / CBS 651.72 / NBRC 13350 / KCC S-0626 / ISP 5235).